The sequence spans 244 residues: Ribosomal RNA small subunit methyltransferase NEP1 (244 aa).

A disordered region spans residues 1-34 (MAAPSDGFKPRERSGGEQAQDWDALPPKRPRLGA). Residue Ala2 is modified to N-acetylalanine. Ser5 and Ser14 each carry phosphoserine. S-adenosyl-L-methionine contacts are provided by residues Thr176, Gly201, Gly206, and 219–224 (ISNYPL).

The protein belongs to the class IV-like SAM-binding methyltransferase superfamily. RNA methyltransferase NEP1 family. Homodimer. Part of the small subunit (SSU) processome, composed of more than 70 proteins and the RNA chaperone small nucleolar RNA (snoRNA) U3.

It localises to the nucleus. The protein resides in the nucleolus. The enzyme catalyses pseudouridine(1248) in human 18S rRNA + S-adenosyl-L-methionine = N(1)-methylpseudouridine(1248) in human 18S rRNA + S-adenosyl-L-homocysteine + H(+). In terms of biological role, S-adenosyl-L-methionine-dependent pseudouridine N(1)-methyltransferase that methylates pseudouridine at position 1248 (Psi1248) in 18S rRNA. Involved the biosynthesis of the hypermodified N1-methyl-N3-(3-amino-3-carboxypropyl) pseudouridine (m1acp3-Psi) conserved in eukaryotic 18S rRNA. Is not able to methylate uridine at this position. Also has an essential role in 40S ribosomal subunit biogenesis independent on its methyltransferase activity, facilitating the incorporation of ribosomal protein S19 during the formation of pre-ribosomes. Part of the small subunit (SSU) processome, first precursor of the small eukaryotic ribosomal subunit. During the assembly of the SSU processome in the nucleolus, many ribosome biogenesis factors, an RNA chaperone and ribosomal proteins associate with the nascent pre-rRNA and work in concert to generate RNA folding, modifications, rearrangements and cleavage as well as targeted degradation of pre-ribosomal RNA by the RNA exosome. This Homo sapiens (Human) protein is Ribosomal RNA small subunit methyltransferase NEP1.